Here is a 477-residue protein sequence, read N- to C-terminus: Asparaginyl-tRNA synthetase (477 aa).

A mitochondrion-targeting transit peptide spans 1 to 14 (MLGVRCLLRSVRFC). K353 carries the post-translational modification N6-acetyllysine.

The protein belongs to the class-II aminoacyl-tRNA synthetase family. As to quaternary structure, homodimer.

The protein resides in the mitochondrion matrix. It is found in the mitochondrion. It catalyses the reaction tRNA(Asn) + L-asparagine + ATP = L-asparaginyl-tRNA(Asn) + AMP + diphosphate + H(+). Its function is as follows. Mitochondrial aminoacyl-tRNA synthetase that catalyzes the specific attachment of the asparagine amino acid (aa) to the homologous transfer RNA (tRNA), further participating in protein synthesis. The reaction occurs in a two steps: asparagine is first activated by ATP to form Asn-AMP and then transferred to the acceptor end of tRNA(Asn). This Homo sapiens (Human) protein is Asparaginyl-tRNA synthetase.